The sequence spans 207 residues: ADP-ribose pyrophosphatase (207 aa).

Substrate contacts are provided by residues 37 to 38 (RE) and R64. Residues 41 to 172 (EHFGAVAIVA…EIVNSIAIAG (132 aa)) enclose the Nudix hydrolase domain. A76 contacts Mg(2+). The Nudix box signature appears at 77–99 (GLLDVAGEPPHLTAARELREEVG). Residue L78 coordinates substrate. Positions 93 and 97 each coordinate Mg(2+). Residues 114–116 (APG) and E120 each bind substrate. E142 serves as a coordination point for Mg(2+). Catalysis depends on E142, which acts as the Proton acceptor.

The protein belongs to the Nudix hydrolase family. As to quaternary structure, homodimer. Mg(2+) serves as cofactor. Requires Mn(2+) as cofactor.

It catalyses the reaction ADP-D-ribose + H2O = D-ribose 5-phosphate + AMP + 2 H(+). The enzyme catalyses 8-oxo-dGDP + H2O = 8-oxo-dGMP + phosphate + H(+). The catalysed reaction is 8-oxo-GDP + H2O = 8-oxo-GMP + phosphate + H(+). In terms of biological role, catalyzes the hydrolysis of ADP-ribose (ADPR) to AMP and ribose-5-phosphate. Can also hydrolyze ADP-mannose and ADP-glucose, with lower efficiency. Has weaker activity with NAD, GDP-sugars and UDP-sugars. Also catalyzes the conversion of 8-oxo-dGDP to 8-oxo-dGMP, and 8-oxo-GDP to 8-oxo-GMP. Functions in concert with MutT1 to detoxify 8-oxo-dGTP to 8-oxo-dGMP and may play an important role in supporting cellular growth under oxidative stress. The catalytic efficiency is much higher for the hydrolysis of ADPR than 8-oxo-dGTP, suggesting a more relevant biological role in hydrolysis of ADPR. The protein is ADP-ribose pyrophosphatase of Mycobacterium tuberculosis (strain ATCC 25618 / H37Rv).